Consider the following 837-residue polypeptide: Vacuolar membrane protease (837 aa).

The Cytoplasmic segment spans residues 1–36 (MSEEEVHDTSSEASEVFTNQPNAFVRGVRSIFGYRK). Residues 37-57 (TSLTLFVILTIVVTAGLSFYD) traverse the membrane as a helical segment. The Vacuolar segment spans residues 58 to 355 (NSLELTIELP…FATPISALAR (298 aa)). N-linked (GlcNAc...) asparagine glycosylation is present at Asn-143. Residues His-157 and Asp-169 each coordinate Zn(2+). Glu-201 serves as the catalytic Proton acceptor. Positions 202, 227, and 299 each coordinate Zn(2+). A helical transmembrane segment spans residues 356 to 376 (VNLVLLVLFPVVSTPLLFVIV). Residues 377 to 384 (KYKKWKLR) are Cytoplasmic-facing. The chain crosses the membrane as a helical span at residues 385 to 405 (VTNFLGVPLAMGLAVAVGQVG). The Vacuolar portion of the chain corresponds to 406 to 415 (NPMLVSSHPM). A helical transmembrane segment spans residues 416 to 436 (MVVATTTSIVVLVYYVVLNGV). Residues 437-446 (DWVNTSSDQK) lie on the Cytoplasmic side of the membrane. The chain crosses the membrane as a helical span at residues 447–467 (LVTMIEVSFVYWVVLVYVTWS). Topologically, residues 468-474 (GGDHTGE) are vacuolar. The chain crosses the membrane as a helical span at residues 475–495 (FGVTVLFFVQASTSLLGLIGW). At 496–539 (TFTRVRGGDEPLLSGEEERYGTEDERDTEKPLVEHNYDWSLQYL) the chain is on the cytoplasmic side. The chain crosses the membrane as a helical span at residues 540–560 (LIVPVSSLVVYNSGWLVLEGV). An N-linked (GlcNAc...) asparagine glycan is attached at Asn-561. Topologically, residues 561 to 572 (NKTVQESLASEH) are vacuolar. The chain crosses the membrane as a helical span at residues 573-593 (LIYWIVVVFSQFLVLPVVPFI). The Cytoplasmic segment spans residues 594-598 (TKFNR). A helical membrane pass occupies residues 599-619 (YIVLGLSVVAVVGVLMSMAVH). The Vacuolar portion of the chain corresponds to 620–837 (PFNQGSPMKL…LVGVVKHVDV (218 aa)). Asn-689 is a glycosylation site (N-linked (GlcNAc...) asparagine).

It belongs to the peptidase M28 family. It depends on Zn(2+) as a cofactor.

Its subcellular location is the vacuole membrane. Functionally, may be involved in vacuolar sorting and osmoregulation. This is Vacuolar membrane protease from Candida albicans (strain WO-1) (Yeast).